Here is a 235-residue protein sequence, read N- to C-terminus: Urease accessory protein UreF (235 aa).

This sequence belongs to the UreF family. In terms of assembly, ureD, UreF and UreG form a complex that acts as a GTP-hydrolysis-dependent molecular chaperone, activating the urease apoprotein by helping to assemble the nickel containing metallocenter of UreC. The UreE protein probably delivers the nickel.

It localises to the cytoplasm. In terms of biological role, required for maturation of urease via the functional incorporation of the urease nickel metallocenter. The chain is Urease accessory protein UreF from Haemophilus influenzae (strain ATCC 51907 / DSM 11121 / KW20 / Rd).